We begin with the raw amino-acid sequence, 351 residues long: UDP-3-O-acylglucosamine N-acyltransferase (351 aa).

Residue His-240 is the Proton acceptor of the active site.

It belongs to the transferase hexapeptide repeat family. LpxD subfamily. As to quaternary structure, homotrimer.

It carries out the reaction a UDP-3-O-[(3R)-3-hydroxyacyl]-alpha-D-glucosamine + a (3R)-hydroxyacyl-[ACP] = a UDP-2-N,3-O-bis[(3R)-3-hydroxyacyl]-alpha-D-glucosamine + holo-[ACP] + H(+). It functions in the pathway bacterial outer membrane biogenesis; LPS lipid A biosynthesis. Functionally, catalyzes the N-acylation of UDP-3-O-acylglucosamine using 3-hydroxyacyl-ACP as the acyl donor. Is involved in the biosynthesis of lipid A, a phosphorylated glycolipid that anchors the lipopolysaccharide to the outer membrane of the cell. This Pseudomonas fluorescens (strain ATCC BAA-477 / NRRL B-23932 / Pf-5) protein is UDP-3-O-acylglucosamine N-acyltransferase.